Reading from the N-terminus, the 1093-residue chain is Protein transport protein Sec24A (1093 aa).

4 disordered regions span residues 1–29 (MSQP…SGSP), 60–168 (HPIP…TSLT), 189–226 (GPSV…ALTP), and 294–328 (SLPP…TQTP). Composition is skewed to polar residues over residues 112 to 126 (ASQN…SSSF) and 138 to 168 (WQYN…TSLT). 2 stretches are compositionally biased toward pro residues: residues 191–201 (SVPPLVNPPLP) and 209–221 (PHGP…PPPV). Over residues 299-328 (YQNTTPPGATGVPPSSLNYPSGPQAFTQTP) the composition is skewed to polar residues. The Zn(2+) site is built by Cys431, Cys434, Cys452, and Cys455. Positions 431 to 455 (CRSCRTYINPFVSFLDQRRWKCNLC) are zinc finger-like. One copy of the Gelsolin-like repeat lies at 966–1038 (PQPPILQLSV…TPESARIIAF (73 aa)).

The protein belongs to the SEC23/SEC24 family. SEC24 subfamily. COPII is composed of at least five proteins: the Sec23/24 complex, the Sec13/31 complex and Sar1. Interacts with TMED2. Interacts (as part of the Sec23/24 complex) with SEC22B; recruits SEC22B into COPII-coated vesicles for its transport from the endoplasmic reticulum to the Golgi. Interacts with STING1; promoting STING1 translocation to COPII vesicles in a STEEP1-dependent manner. Interacts with TMEM39A. Interacts with SACM1L; this interaction is reduced in the absence of TMEM39A. Interacts with kinase FAM20C; transport of FAM20C from the endoplasmic reticulum to the Golgi is likely to be mediated by COPII vesicles.

It localises to the cytoplasmic vesicle. The protein localises to the COPII-coated vesicle membrane. Its subcellular location is the endoplasmic reticulum membrane. It is found in the cytoplasm. The protein resides in the cytosol. In terms of biological role, component of the coat protein complex II (COPII) which promotes the formation of transport vesicles from the endoplasmic reticulum (ER). The coat has two main functions, the physical deformation of the endoplasmic reticulum membrane into vesicles and the selection of cargo molecules for their transport to the Golgi complex. Plays a central role in cargo selection within the COPII complex and together with SEC24B may have a different specificity compared to SEC24C and SEC24D. May package preferentially cargos with cytoplasmic DxE or LxxLE motifs and may also recognize conformational epitopes. This is Protein transport protein Sec24A from Homo sapiens (Human).